We begin with the raw amino-acid sequence, 194 residues long: Large ribosomal subunit protein uL6z/uL6y (194 aa).

Phosphothreonine is present on T75.

The protein belongs to the universal ribosomal protein uL6 family.

The chain is Large ribosomal subunit protein uL6z/uL6y (RPL9B) from Arabidopsis thaliana (Mouse-ear cress).